We begin with the raw amino-acid sequence, 954 residues long: Bifunctional glutamine synthetase adenylyltransferase/adenylyl-removing enzyme (954 aa).

Positions 1 to 452 are adenylyl removase; that stretch reads MAVQKDSNKS…HFKATVGGEE (452 aa). The segment at 458-954 is adenylyl transferase; that stretch reads EHWTAQLWNV…ILAIYQAILE (497 aa).

The protein belongs to the GlnE family. It depends on Mg(2+) as a cofactor.

It carries out the reaction [glutamine synthetase]-O(4)-(5'-adenylyl)-L-tyrosine + phosphate = [glutamine synthetase]-L-tyrosine + ADP. It catalyses the reaction [glutamine synthetase]-L-tyrosine + ATP = [glutamine synthetase]-O(4)-(5'-adenylyl)-L-tyrosine + diphosphate. In terms of biological role, involved in the regulation of glutamine synthetase GlnA, a key enzyme in the process to assimilate ammonia. When cellular nitrogen levels are high, the C-terminal adenylyl transferase (AT) inactivates GlnA by covalent transfer of an adenylyl group from ATP to specific tyrosine residue of GlnA, thus reducing its activity. Conversely, when nitrogen levels are low, the N-terminal adenylyl removase (AR) activates GlnA by removing the adenylyl group by phosphorolysis, increasing its activity. The regulatory region of GlnE binds the signal transduction protein PII (GlnB) which indicates the nitrogen status of the cell. The chain is Bifunctional glutamine synthetase adenylyltransferase/adenylyl-removing enzyme from Shewanella oneidensis (strain ATCC 700550 / JCM 31522 / CIP 106686 / LMG 19005 / NCIMB 14063 / MR-1).